A 203-amino-acid chain; its full sequence is Ras-related protein Rab-24 (203 aa).

Tyr17 bears the Phosphotyrosine mark. Residues Gly19, Lys20, Thr21, and Thr40 each contribute to the GTP site. Mg(2+) contacts are provided by Thr21, Thr40, and Asp63. Residues 30 to 45 (DRFLVGPYQNTIGAAF) are switch I. The interval 63–80 (DTAGSERYEAMSRIYYRG) is switch II. The GTP site is built by Gly66, Lys121, Asp123, and Lys156. Position 172 is a phosphotyrosine (Tyr172). 2 S-geranylgeranyl cysteine lipidation sites follow: Cys200 and Cys201.

It belongs to the small GTPase superfamily. Rab family. Interacts with ZFYVE20. Does not interact with the GDP dissociation inhibitors ARHGDIA and ARHGDIB. Mg(2+) serves as cofactor. Prenylated; prenylation is required for RAB24 localization to autophagosomes. Isoprenylation is inefficient compared to other Rab family members. In terms of processing, phosphorylated at Tyr-17 and Tyr-172. Cytosolic pool of RAB24 is more phosphorylated than the membrane-associated pool. In terms of tissue distribution, widely expressed, with highest expression in brain.

The protein localises to the cytoplasm. It localises to the cytosol. It is found in the membrane. Its subcellular location is the cytoplasmic vesicle. The protein resides in the autophagosome membrane. The protein localises to the perinuclear region. It localises to the cytoskeleton. It is found in the spindle. It catalyses the reaction GTP + H2O = GDP + phosphate + H(+). Its activity is regulated as follows. Regulated by guanine nucleotide exchange factors (GEFs) which promote the exchange of bound GDP for free GTP. Regulated by GTPase activating proteins (GAPs) which increase the GTP hydrolysis activity. Inhibited by GDP dissociation inhibitors (GDIs). Functionally, the small GTPases Rab are key regulators of intracellular membrane trafficking, from the formation of transport vesicles to their fusion with membranes. Rabs cycle between an inactive GDP-bound form and an active GTP-bound form that is able to recruit to membranes different sets of downstream effectors directly responsible for vesicle formation, movement, tethering and fusion. RAB24 is an atypical RAB protein that presents low GTPase activity and thereby exists predominantly in the GTP-bound active state. RAB24 is required for the clearance of late autophagic vacuoles under basal conditions. It is not needed for starvation-induced autophagy. Involved in the modulation of meiotic apparatus assembly and meiotic progression during oocyte maturation, possibly through regulation of kinetochore-microtubule interaction. This chain is Ras-related protein Rab-24, found in Mus musculus (Mouse).